A 180-amino-acid chain; its full sequence is UPF0149 protein XCV3523 (180 aa).

The protein belongs to the UPF0149 family.

The sequence is that of UPF0149 protein XCV3523 from Xanthomonas euvesicatoria pv. vesicatoria (strain 85-10) (Xanthomonas campestris pv. vesicatoria).